The primary structure comprises 345 residues: Anthranilate phosphoribosyltransferase (345 aa).

5-phospho-alpha-D-ribose 1-diphosphate is bound by residues Gly-84, 87–88 (GD), Thr-92, 94–97 (NIST), 112–120 (KHGNRSVSS), and Ser-124. Gly-84 is a binding site for anthranilate. Ser-96 contributes to the Mg(2+) binding site. Asn-115 lines the anthranilate pocket. Arg-170 serves as a coordination point for anthranilate. The Mg(2+) site is built by Asp-229 and Glu-230.

This sequence belongs to the anthranilate phosphoribosyltransferase family. As to quaternary structure, homodimer. Requires Mg(2+) as cofactor.

It carries out the reaction N-(5-phospho-beta-D-ribosyl)anthranilate + diphosphate = 5-phospho-alpha-D-ribose 1-diphosphate + anthranilate. It functions in the pathway amino-acid biosynthesis; L-tryptophan biosynthesis; L-tryptophan from chorismate: step 2/5. Functionally, catalyzes the transfer of the phosphoribosyl group of 5-phosphorylribose-1-pyrophosphate (PRPP) to anthranilate to yield N-(5'-phosphoribosyl)-anthranilate (PRA). This is Anthranilate phosphoribosyltransferase from Xanthomonas euvesicatoria pv. vesicatoria (strain 85-10) (Xanthomonas campestris pv. vesicatoria).